A 206-amino-acid polypeptide reads, in one-letter code: Ribosomal RNA small subunit methyltransferase G (206 aa).

Residues G73, L78, V124 to E125, and R139 each bind S-adenosyl-L-methionine.

It belongs to the methyltransferase superfamily. RNA methyltransferase RsmG family.

It is found in the cytoplasm. The catalysed reaction is guanosine(527) in 16S rRNA + S-adenosyl-L-methionine = N(7)-methylguanosine(527) in 16S rRNA + S-adenosyl-L-homocysteine. Its function is as follows. Specifically methylates the N7 position of guanine in position 527 of 16S rRNA. This Pectobacterium atrosepticum (strain SCRI 1043 / ATCC BAA-672) (Erwinia carotovora subsp. atroseptica) protein is Ribosomal RNA small subunit methyltransferase G.